We begin with the raw amino-acid sequence, 366 residues long: Trans-enoyl reductase caaB (366 aa).

The Enoyl reductase (ER) domain occupies 19-363 (GAGQLSIYHD…RQTVSGHKLV (345 aa)). An NADP(+)-binding site is contributed by tyrosine 219.

It belongs to the zinc-containing alcohol dehydrogenase family. In terms of assembly, monomer.

Its pathway is secondary metabolite biosynthesis. Its function is as follows. Trans-enoyl reductase; part of the gene cluster that produces the acyltetronic acid derivatives carlosic acid, agglomerin F and carlosic acid methyl ether. The PKS domains of caaA condenses two malonyl-CoAs into an acetyl starter unit, and form 1,3-diketohexanyl-ACP with the help of the trans-enoyl reductase caaB. Next, the C domain of caaA forms the ester bond between the acyl chain and L-malic acid (derived from the TCA cycle) and accepted by the A domain instead of an amino acid. Finally, the terminal reductase/Dieckmann cyclization (R/DKC) domain cyclizes the intermediate and releases the product as carlosic acid. Decarboxylation of carlosic acid followed by formation of the exocyclic double bond is likely to be catalyzed by the cytochrome P450 monooxygenase caaC. Thus, decarboxylation and oxidation would be coupled (performed by one enzyme) through concomitant abstraction of the hydrogen at C-4. Finally, sequential oxidations of the terminal C-10 methyl group to form carboxylic acid would be catalyzed by the 2-oxoglutarate-dependent dioxygenase caaD, which is required for the biosynthesis of agglomerin F. The protein is Trans-enoyl reductase caaB of Aspergillus niger (strain ATCC MYA-4892 / CBS 513.88 / FGSC A1513).